The primary structure comprises 381 residues: F-box/LRR-repeat protein At4g14103 (381 aa).

An F-box domain is found at 7–60 (RDVISSLPDDISSHILSFLPTKEAASTSVLSKKWRYLFAFVPNLDLDDSVYLNP). LRR repeat units lie at residues 118 to 146 (DLHL…KLRF), 171 to 196 (HFEE…VLDD), 218 to 243 (SWQE…KFTD), 249 to 274 (YPKV…LINY), 299 to 330 (TLYL…TIES), and 331 to 356 (NPRV…IFQG).

The sequence is that of F-box/LRR-repeat protein At4g14103 from Arabidopsis thaliana (Mouse-ear cress).